The primary structure comprises 408 residues: (R)-2-hydroxyisocaproyl-CoA dehydratase alpha subunit (408 aa).

A substrate-binding site is contributed by glutamate 55. Residues cysteine 84, cysteine 117, and cysteine 346 each coordinate [4Fe-4S] cluster.

The protein belongs to the FldB/FldC dehydratase alpha/beta subunit family. Part of the heterodimeric complex HadBC composed of (R)-2-hydroxyisocaproyl-CoA dehydratase alpha (HadB) and beta (HadC) subunit. [4Fe-4S] cluster is required as a cofactor.

It carries out the reaction (R)-2-hydroxy-4-methylpentanoyl-CoA = 4-methylpent-2-enoyl-CoA + H2O. Its activity is regulated as follows. Activated by HadI. Its function is as follows. Involved in the reductive branch of L-leucine fermentation. Catalyzes the irreversible beta/alpha-elimination of water from (R)-2-hydroxyisocaproyl-CoA to yield isocaprenoyl-CoA. This beta/alpha-dehydration depends on the reductive formation of ketyl radicals on the substrate generated by injection of a single electron from the ATP-dependent activator protein HadI. The enzyme is specific for the R-isomer. The sequence is that of (R)-2-hydroxyisocaproyl-CoA dehydratase alpha subunit from Clostridioides difficile (Peptoclostridium difficile).